A 497-amino-acid chain; its full sequence is Serine hydroxymethyltransferase (497 aa).

(6S)-5,6,7,8-tetrahydrofolate-binding positions include Leu176 and 180–182 (GHL). Lys289 carries the N6-(pyridoxal phosphate)lysine modification.

It belongs to the SHMT family. As to quaternary structure, homodimer. It depends on pyridoxal 5'-phosphate as a cofactor.

It is found in the cytoplasm. The enzyme catalyses (6R)-5,10-methylene-5,6,7,8-tetrahydrofolate + glycine + H2O = (6S)-5,6,7,8-tetrahydrofolate + L-serine. Its pathway is one-carbon metabolism; tetrahydrofolate interconversion. It participates in amino-acid biosynthesis; glycine biosynthesis; glycine from L-serine: step 1/1. Functionally, catalyzes the reversible interconversion of serine and glycine with tetrahydrofolate (THF) serving as the one-carbon carrier. This reaction serves as the major source of one-carbon groups required for the biosynthesis of purines, thymidylate, methionine, and other important biomolecules. Also exhibits THF-independent aldolase activity toward beta-hydroxyamino acids, producing glycine and aldehydes, via a retro-aldol mechanism. This is Serine hydroxymethyltransferase from Chlamydia abortus (strain DSM 27085 / S26/3) (Chlamydophila abortus).